A 402-amino-acid polypeptide reads, in one-letter code: Indole-3-glycerol phosphate synthase, chloroplastic (402 aa).

Residues 1 to 65 constitute a chloroplast transit peptide; sequence MEGLVPVQRL…SDLKESLAVS (65 aa).

The protein belongs to the TrpC family. As to expression, expressed in leaves.

The protein localises to the plastid. It is found in the chloroplast. The enzyme catalyses 1-(2-carboxyphenylamino)-1-deoxy-D-ribulose 5-phosphate + H(+) = (1S,2R)-1-C-(indol-3-yl)glycerol 3-phosphate + CO2 + H2O. Its pathway is amino-acid biosynthesis; L-tryptophan biosynthesis; L-tryptophan from chorismate: step 4/5. Functionally, indole-3-glycerol phosphate synthase required for tryptophan biosynthesis. This chain is Indole-3-glycerol phosphate synthase, chloroplastic, found in Arabidopsis thaliana (Mouse-ear cress).